A 416-amino-acid polypeptide reads, in one-letter code: 2-amino-3-ketobutyrate coenzyme A ligase, mitochondrial (416 aa).

The N-terminal 18 residues, 1–18 (MWASFMWHGALSPGRRAH), are a transit peptide targeting the mitochondrion. Lys-42 is modified (N6-acetyllysine; alternate). Lys-42 is modified (N6-succinyllysine; alternate). 131-132 (CF) contacts pyridoxal 5'-phosphate. His-156 serves as a coordination point for substrate. The residue at position 184 (Lys-184) is an N6-acetyllysine; alternate. The residue at position 184 (Lys-184) is an N6-succinyllysine; alternate. Pyridoxal 5'-phosphate is bound by residues Ser-203, 259 to 262 (TLGK), and 292 to 293 (SN). An N6-(pyridoxal phosphate)lysine modification is found at Lys-262. 2 positions are modified to N6-succinyllysine: Lys-323 and Lys-365. Lys-380 carries the post-translational modification N6-acetyllysine; alternate. At Lys-380 the chain carries N6-succinyllysine; alternate. Arg-386 contributes to the substrate binding site.

Belongs to the class-II pyridoxal-phosphate-dependent aminotransferase family. Pyridoxal 5'-phosphate is required as a cofactor.

The protein localises to the mitochondrion. It localises to the nucleus. The enzyme catalyses glycine + acetyl-CoA = (2S)-2-amino-3-oxobutanoate + CoA. It functions in the pathway amino-acid degradation; L-threonine degradation via oxydo-reductase pathway; glycine from L-threonine: step 2/2. Pyridoxal phosphate (PLP) dependent enzyme, which catalyzes the cleavage of 2-amino-3-oxobutanoate to glycine and acetyl-CoA. Catalyzes the second reaction step on the main metabolic degradation pathway for L-threonine. The polypeptide is 2-amino-3-ketobutyrate coenzyme A ligase, mitochondrial (Gcat) (Mus musculus (Mouse)).